The chain runs to 585 residues: MDQLYLEIEISTQKETTIYTGVSSFLALFTYKFLKDPKNVRVNFVSTKIEGGKIALRSSQLKKELTDRHITCRDAASLPAIQDLKLPIYEKDGNTFIAGTCAVCRELIARQPNEELKKLLGFKGSCLLAPSEASIWTKFCEVDLVAVVSKLHSGQVLEFVPQEVVRFEQHMNEPVRMHNIYKQAREQANQTENGGKVKRRERVQIKCTTPKEELLIEHRFAEGISFTIADIILYPLLRIVFQHCGQMLPHFPLTSTWFSEIDSFGDKCARVLRDLYVPQAIKTPPGELGIPDCEATSLYKADPKRYKPRNRIYTSQLELEAALSKLSSLQLQFNSDSEHTYGQQLIDWEQIEPTHAKSSALPKERLERKRQQLENLANAVVSLAQPGDRIVDFCSGTGHLAILLALKLPNCTIIVMENKAFSLLQAQKRSNELGLTNCVFYQCNIDYFVGGFKIGASLHACGTATDIVLQQCRRAKAHFVCCPCCYGSLQPMPHISYPLSKAFQKVLDTKDYLYIAHSADQAHEMGTTNCKPETTLQGLHCMSVVDTDRLLQAEEAGYQVILTRLKPEQCTPKNHLLVGRFVKQN.

Positions 120–275 constitute a GST C-terminal domain; that stretch reads LGFKGSCLLA…DKCARVLRDL (156 aa).

It belongs to the GSTCD family.

In Drosophila melanogaster (Fruit fly), this protein is Glutathione S-transferase C-terminal domain-containing protein homolog.